The sequence spans 283 residues: Bifunctional protein FolD (283 aa).

Residues 165–167, Ser190, and Val231 each bind NADP(+); that span reads GRS.

It belongs to the tetrahydrofolate dehydrogenase/cyclohydrolase family. In terms of assembly, homodimer.

The enzyme catalyses (6R)-5,10-methylene-5,6,7,8-tetrahydrofolate + NADP(+) = (6R)-5,10-methenyltetrahydrofolate + NADPH. It carries out the reaction (6R)-5,10-methenyltetrahydrofolate + H2O = (6R)-10-formyltetrahydrofolate + H(+). The protein operates within one-carbon metabolism; tetrahydrofolate interconversion. Functionally, catalyzes the oxidation of 5,10-methylenetetrahydrofolate to 5,10-methenyltetrahydrofolate and then the hydrolysis of 5,10-methenyltetrahydrofolate to 10-formyltetrahydrofolate. The chain is Bifunctional protein FolD from Anoxybacillus flavithermus (strain DSM 21510 / WK1).